Here is a 434-residue protein sequence, read N- to C-terminus: Serine hydroxymethyltransferase (434 aa).

(6S)-5,6,7,8-tetrahydrofolate is bound by residues Leu-133 and 137–139 (GHL). Lys-242 is modified (N6-(pyridoxal phosphate)lysine).

It belongs to the SHMT family. As to quaternary structure, homodimer. Pyridoxal 5'-phosphate serves as cofactor.

It localises to the cytoplasm. The enzyme catalyses (6R)-5,10-methylene-5,6,7,8-tetrahydrofolate + glycine + H2O = (6S)-5,6,7,8-tetrahydrofolate + L-serine. The protein operates within one-carbon metabolism; tetrahydrofolate interconversion. Its pathway is amino-acid biosynthesis; glycine biosynthesis; glycine from L-serine: step 1/1. Catalyzes the reversible interconversion of serine and glycine with tetrahydrofolate (THF) serving as the one-carbon carrier. This reaction serves as the major source of one-carbon groups required for the biosynthesis of purines, thymidylate, methionine, and other important biomolecules. Also exhibits THF-independent aldolase activity toward beta-hydroxyamino acids, producing glycine and aldehydes, via a retro-aldol mechanism. This Hyphomicrobium methylovorum protein is Serine hydroxymethyltransferase.